A 232-amino-acid polypeptide reads, in one-letter code: Phosphatidylserine decarboxylase proenzyme (232 aa).

S190 (schiff-base intermediate with substrate; via pyruvic acid) is an active-site residue. A Pyruvic acid (Ser); by autocatalysis modification is found at S190.

This sequence belongs to the phosphatidylserine decarboxylase family. PSD-A subfamily. Heterodimer of a large membrane-associated beta subunit and a small pyruvoyl-containing alpha subunit. Pyruvate serves as cofactor. Is synthesized initially as an inactive proenzyme. Formation of the active enzyme involves a self-maturation process in which the active site pyruvoyl group is generated from an internal serine residue via an autocatalytic post-translational modification. Two non-identical subunits are generated from the proenzyme in this reaction, and the pyruvate is formed at the N-terminus of the alpha chain, which is derived from the carboxyl end of the proenzyme. The post-translation cleavage follows an unusual pathway, termed non-hydrolytic serinolysis, in which the side chain hydroxyl group of the serine supplies its oxygen atom to form the C-terminus of the beta chain, while the remainder of the serine residue undergoes an oxidative deamination to produce ammonia and the pyruvoyl prosthetic group on the alpha chain.

It is found in the cell membrane. It carries out the reaction a 1,2-diacyl-sn-glycero-3-phospho-L-serine + H(+) = a 1,2-diacyl-sn-glycero-3-phosphoethanolamine + CO2. It participates in phospholipid metabolism; phosphatidylethanolamine biosynthesis; phosphatidylethanolamine from CDP-diacylglycerol: step 2/2. Its function is as follows. Catalyzes the formation of phosphatidylethanolamine (PtdEtn) from phosphatidylserine (PtdSer). In Brucella abortus (strain S19), this protein is Phosphatidylserine decarboxylase proenzyme.